The following is a 661-amino-acid chain: Potassium voltage-gated channel subfamily KQT member 1 (661 aa).

Disordered regions lie at residues 1-29 and 42-88; these read MAAA…ESAG and ESGP…SLDP. The Cytoplasmic portion of the chain corresponds to 1 to 119; sequence MAAASTPPRA…YNFLERPTGW (119 aa). Phosphoserine; by PKA is present on Ser27. The segment covering 54–85 has biased composition (pro residues); sequence VSPPSAPEPAPPASPASPAPPAADQGPQPPVS. Residues 120 to 141 traverse the membrane as a helical segment; that stretch reads KCFAYHFTVFLIVLVCLIFSVL. The Extracellular segment spans residues 142-152; it reads STIEQYATLAT. The helical transmembrane segment at 153 to 175 threads the bilayer; the sequence is GTLFWMEIVLVVFFGTEYVVRLW. At 176 to 191 the chain is on the cytoplasmic side; the sequence is SAGCRSKYVGLWGRLR. Residues 192–217 traverse the membrane as a helical segment; sequence FARKPISIIDLIVVVASMVVLCVGSK. Residues 218–225 lie on the Extracellular side of the membrane; that stretch reads GQVFATSA. A helical; Voltage-sensor membrane pass occupies residues 226 to 241; sequence IRGIRFLQILRMLHVD. An interaction with KCNE3 region spans residues 237–245; that stretch reads MLHVDRQGG. Topologically, residues 242 to 259 are cytoplasmic; that stretch reads RQGGTWRLLGSVVFIHRQ. Gln243 serves as a coordination point for a 1,2-diacyl-sn-glycero-3-phospho-(1D-myo-inositol-4,5-bisphosphate). A helical transmembrane segment spans residues 260 to 282; the sequence is ELITTLYIGFLGLIFSSYFVYLA. Topologically, residues 283-298 are extracellular; sequence EKDAVNESGRVEFGSY. Residue Asn288 is glycosylated (N-linked (GlcNAc...) asparagine). The segment at residues 299–319 is an intramembrane region (pore-forming); it reads ADALWWGVVTVTTIGYGDKVP. The Extracellular segment spans residues 320-321; sequence QT. Residues 322 to 347 form a helical membrane-spanning segment; that stretch reads WVGKTIASCFSVFAISFFALPAGILG. Residues 348-661 are Cytoplasmic-facing; the sequence is SGFALKVQQK…VPRRDPEEGS (314 aa). An interaction with CALM region spans residues 369 to 381; it reads AAASLIQTAWRCY. Phosphoserine is present on residues Ser406 and Ser408. The segment at 514–528 is interaction with CALM; calcium-dependent; that stretch reads KVIRRMQYFVAKKKF. The segment at 534–571 is interaction with KCNE1 C-terminus; it reads PYDVRDVIEQYSQGHLNLMVRIKELQRRLDQSIGKPSL. Residues 584–620 adopt a coiled-coil conformation; the sequence is SNSIGARLNRVEDKVTQLDQRLVLIADMLQQLLALHQ. Residues 587–615 form an interaction with AKAP9 region; that stretch reads IGARLNRVEDKVTQLDQRLVLIADMLQQL. The C-terminal assembly domain (tetramerization) stretch occupies residues 588-619; the sequence is GARLNRVEDKVTQLDQRLVLIADMLQQLLALH. The interval 624 to 661 is disordered; that stretch reads HGGAHPAQARDGDPADPELFLPTYEQLTVPRRDPEEGS.

This sequence belongs to the potassium channel family. KQT (TC 1.A.1.15) subfamily. Kv7.1/KCNQ1 sub-subfamily. As to quaternary structure, tetramer. Heterotetramer with KCNE1; targets to the membrane raft. Interacts (via C-terminus) with CALM; forms a heterooctameric structure (with 4:4 KCNQ1:CALM stoichiometry) in a calcium-independent manner. Interacts with AKAP9; targets protein kinase A (PKA) catalytic and regulatory subunits and protein phosphatase 1 (PP1) to the KCNQ1-KCNE1 complex, allowing PKA-mediated phosphorylation and increase of delayed rectifier potassium channel activity. Interacts with KCNE2; form a heterooligomer complex that targets to the membrane raft and leading to currents with an apparently instantaneous activation, a rapid deactivation process and a linear current-voltage relationship and decreases the amplitude of the outward current. Interacts with AP2M1; mediates estrogen-induced internalization via clathrin-coated vesicles. Interacts with NEDD4L; promotes internalization and decreases I(Ks) currents. Interacts with USP2; counteracts the NEDD4L-specific down-regulation of I(Ks) and restore plasma membrane localization. Heterotetramer with KCNQ5; has a voltage-gated potassium channel activity. Interacts with KCNE3; four KCNE3 molecules are bound to one KCNQ1 tetramer (4:4 KCNQ1:KCNE3 stoichiometry); alters membrane raft localization; affects KCNQ1 structure and gating properties. Interacts with KCNE4; impairs KCNQ1 localization in lipid rafts and inhibits voltage-gated potassium channel activity. Interacts with KCNE5; impairs KCNQ1 localization in lipid rafts and only conducts current upon strong and continued depolarization. Interacts with SLC5A3; forms coregulatory channel-transporter complexes that modulate Na(+)-coupled myo-inositol influx through the transporter. Post-translationally, phosphorylation at Ser-27 by PKA; increases delayed rectifier potassium channel activity of the KCNQ1-KCNE1 complex through a macromolecular complex that includes PKA, PP1, and the targeting protein AKAP9. In terms of processing, ubiquitinated by NEDD4L; promotes internalization. The ubiquitinylated form is internalized through a clathrin-mediated endocytosis by interacting with AP2M1 and is recycled back to the cell membrane via RAB4A and RAB11A. Deubiquitinated by USP2; counteracts the NEDD4L-specific down-regulation of I(Ks) and restores the membrane localization.

Its subcellular location is the cell membrane. The protein resides in the cytoplasmic vesicle membrane. It localises to the early endosome. It is found in the membrane raft. The protein localises to the endoplasmic reticulum. Its subcellular location is the basolateral cell membrane. The protein resides in the apical cell membrane. It carries out the reaction K(+)(in) = K(+)(out). PIP2 molecule is essential to activate KCNQ channels by inducing the coupling of the voltage-sensing domain (VSD) and the pore-forming domain (PD). Upon channel activation, PIP2 disrupts the VSD-calmodulin/CALM interactions, causing the release of CALM from the VSD which triggers the opening of the gate. Calcium potentiates KCNQ1 channel current through calcium-bound CALM. Calcium-bound CALM competes with PIP2 to stabilize the channel open state. Pore-forming subunit of the voltage-gated potassium (Kv) channel involved in the regulation of cardiomyocyte excitability and important in normal development and functions of myocardium, inner ear, stomach and colon. Associates with KCNE beta subunits that modulates current kinetics. Induces a voltage-dependent by rapidly activating and slowly deactivating potassium-selective outward current. Also promotes a delayed voltage activated potassium current showing outward rectification characteristic. During beta-adrenergic receptor stimulation participates in cardiac repolarization by associating with KCNE1 to form the I(Ks) cardiac potassium current that increases the amplitude and slows down the activation kinetics of outward potassium current I(Ks). Muscarinic agonist oxotremorine-M strongly suppresses KCNQ1/KCNE1 current. When associated with KCNE3, forms the potassium channel that is important for cyclic AMP-stimulated intestinal secretion of chloride ions. This interaction with KCNE3 is reduced by 17beta-estradiol, resulting in the reduction of currents. During conditions of increased substrate load, maintains the driving force for proximal tubular and intestinal sodium ions absorption, gastric acid secretion, and cAMP-induced jejunal chloride ions secretion. Allows the provision of potassium ions to the luminal membrane of the secretory canaliculus in the resting state as well as during stimulated acid secretion. When associated with KCNE2, forms a heterooligomer complex leading to currents with an apparently instantaneous activation, a rapid deactivation process and a linear current-voltage relationship and decreases the amplitude of the outward current. When associated with KCNE4, inhibits voltage-gated potassium channel activity. When associated with KCNE5, this complex only conducts current upon strong and continued depolarization. Also forms a heterotetramer with KCNQ5 that has a voltage-gated potassium channel activity. Binds with phosphatidylinositol 4,5-bisphosphate. KCNQ1-KCNE2 channel associates with Na(+)-coupled myo-inositol symporter in the apical membrane of choroid plexus epithelium and regulates the myo-inositol gradient between blood and cerebrospinal fluid with an impact on neuron excitability. The chain is Potassium voltage-gated channel subfamily KQT member 1 from Oryctolagus cuniculus (Rabbit).